The chain runs to 232 residues: Beta-casein (232 aa).

The signal sequence occupies residues M1–A15. N-linked (GlcNAc...) asparagine glycosylation occurs at N22. S24 bears the Phosphoserine mark. At T27 the chain carries Phosphothreonine. Residues S30, S32, S33, and S34 each carry the phosphoserine modification. Over residues K48–N63 the composition is skewed to basic and acidic residues. Residues K48–L74 form a disordered region.

Belongs to the beta-casein family. Mammary gland specific. Secreted in milk.

It is found in the secreted. In terms of biological role, important role in determination of the surface properties of the casein micelles. The polypeptide is Beta-casein (CSN2) (Sus scrofa (Pig)).